A 434-amino-acid polypeptide reads, in one-letter code: Pre-B-cell leukemia transcription factor 3 (434 aa).

Residues 20–41 (SVQGGMALPPPPHGHEGADGDG) form a disordered region. Residues 32 to 41 (HGHEGADGDG) show a composition bias toward basic and acidic residues. A PBC domain is found at 41–234 (GRKQDIGDIL…VMILRSRFLD (194 aa)). A PBC-A region spans residues 48–127 (DILHQIMTIT…EGVSGPEKGG (80 aa)). The PBC-B stretch occupies residues 130–234 (AAAAAAAAAS…VMILRSRFLD (105 aa)). Residues 235–297 (ARRKRRNFSK…NKRIRYKKNI (63 aa)) constitute a DNA-binding region (homeobox; TALE-type). Over residues 326–341 (NQTNSPTTPNSGSSGS) the composition is skewed to low complexity. 2 disordered regions span residues 326-349 (NQTNSPTTPNSGSSGSFNLPNSGD) and 405-434 (ANGGWQDATTPSSVTSPTEGPGSVHSDTSN). Polar residues predominate over residues 405–422 (ANGGWQDATTPSSVTSPT).

The protein belongs to the TALE/PBX homeobox family. Interacts with PBXIP1.

It is found in the nucleus. Its function is as follows. Transcriptional activator that binds the sequence 5'-ATCAATCAA-3'. The chain is Pre-B-cell leukemia transcription factor 3 (Pbx3) from Mus musculus (Mouse).